Consider the following 170-residue polypeptide: ATP synthase subunit b (170 aa).

A helical membrane pass occupies residues 22-41; that stretch reads ILNWAVVVFGLYKFLPGFLG. Positions 72–98 are disordered; it reads AKKDLSSAEEKASQIKADSLKRSESIR.

Belongs to the ATPase B chain family. In terms of assembly, F-type ATPases have 2 components, F(1) - the catalytic core - and F(0) - the membrane proton channel. F(1) has five subunits: alpha(3), beta(3), gamma(1), delta(1), epsilon(1). F(0) has four main subunits: a(1), b(1), b'(1) and c(10-14). The alpha and beta chains form an alternating ring which encloses part of the gamma chain. F(1) is attached to F(0) by a central stalk formed by the gamma and epsilon chains, while a peripheral stalk is formed by the delta, b and b' chains.

It localises to the cellular thylakoid membrane. F(1)F(0) ATP synthase produces ATP from ADP in the presence of a proton or sodium gradient. F-type ATPases consist of two structural domains, F(1) containing the extramembraneous catalytic core and F(0) containing the membrane proton channel, linked together by a central stalk and a peripheral stalk. During catalysis, ATP synthesis in the catalytic domain of F(1) is coupled via a rotary mechanism of the central stalk subunits to proton translocation. Functionally, component of the F(0) channel, it forms part of the peripheral stalk, linking F(1) to F(0). This is ATP synthase subunit b from Prochlorococcus marinus (strain MIT 9301).